The primary structure comprises 258 residues: MMNPLIIKLGGVLLDSEEALERLFTALVNYRESHQRPLIIVHGGGCVVDELMKQLNLPVKKKNGLRVTPADQIDIITGALAGTANKTLLAWAKKHHIASVGLYLGDGDSVKVTQLDEELGHVGLAQPGSPKLINTLLEGGFLPVVSSIGVTEEGQLMNVNADQAATALAATLGADLILLSDVSGILDGKGQRIAEMTAAKAEQLIDQGIITDGMIVKVNAALDAARTLGRPVDIASWRHAEQLPALFNGTPIGTRILA.

Residues 44-45, Arg66, and Asn158 contribute to the substrate site; that span reads GG. ATP contacts are provided by residues 181-186 and 209-211; these read DVSGIL and IIT.

The protein belongs to the acetylglutamate kinase family. ArgB subfamily. As to quaternary structure, homodimer.

The protein localises to the cytoplasm. It carries out the reaction N-acetyl-L-glutamate + ATP = N-acetyl-L-glutamyl 5-phosphate + ADP. Its pathway is amino-acid biosynthesis; L-arginine biosynthesis; N(2)-acetyl-L-ornithine from L-glutamate: step 2/4. Its function is as follows. Catalyzes the ATP-dependent phosphorylation of N-acetyl-L-glutamate. This chain is Acetylglutamate kinase, found in Citrobacter koseri (strain ATCC BAA-895 / CDC 4225-83 / SGSC4696).